Reading from the N-terminus, the 233-residue chain is Tapetum-specific methyltransferase 1 (233 aa).

Lys-8 contacts substrate. Residues Val-52, Glu-74, Gly-76–Val-77, Ser-82, Asp-100, and Ala-129 contribute to the S-adenosyl-L-methionine site. Residue Asp-150 coordinates substrate. Asp-150 contacts a divalent metal cation. An S-adenosyl-L-methionine-binding site is contributed by Asp-152. Residues Asp-176 and Asn-177 each contribute to the a divalent metal cation site.

It belongs to the class I-like SAM-binding methyltransferase superfamily. Cation-dependent O-methyltransferase family. CCoAMT subfamily. A divalent metal cation is required as a cofactor. As to expression, expressed in inflorescences and flower buds. Not detected in roots, leaves or stems. Located exclusively in the tapetum of developing stamen.

Its pathway is aromatic compound metabolism; phenylpropanoid biosynthesis. Methyltransferase involved in phenylpropanoid polyamine conjugate biosynthesis. In vivo, methylates only one of the 5-hydroxyferuloyl moieties of N1,N5,N10-tri-(hydroxyferuloyl)-spermidine, while is able in vitro to convert all three 5-hydroxyferuloyl residues to the corresponding sinapoyl moieties and to methylate caffeoyl CoA and tricaffeoyl spermidine. In Arabidopsis thaliana (Mouse-ear cress), this protein is Tapetum-specific methyltransferase 1 (TSM1).